Here is a 417-residue protein sequence, read N- to C-terminus: Aminoacyltransferase FemB (417 aa).

It belongs to the FemABX family.

It localises to the cytoplasm. The catalysed reaction is MurNAc-L-Ala-D-isoglutaminyl-L-Lys-(N(6)-tri-Gly)-D-Ala-D-Ala-diphospho-di-trans,octa-cis-undecaprenyl-GlcNAc + 2 glycyl-tRNA(Gly) = MurNAc-L-Ala-D-isoglutaminyl-L-Lys-(N(6)-penta-Gly)-D-Ala-D-Ala-diphospho-di-trans,octa-cis-undecaprenyl-GlcNAc + 2 tRNA(Gly) + 2 H(+). Its function is as follows. Catalyzes the incorporation of amino acid(s) into the interchain peptide bridge of peptidoglycan, using aminoacyl-tRNA as amino acid donor. This chain is Aminoacyltransferase FemB (femB), found in Staphylococcus epidermidis.